Consider the following 452-residue polypeptide: 23S rRNA (uracil(1939)-C(5))-methyltransferase RlmD (452 aa).

A disordered region spans residues 1–25 (MSKKKSNSGLRFQPAGGNRTPQVPV). The region spanning 22-80 (QVPVGKKQRLDIERLAGDGRGIAFLDGRTWFVSGALAGEAVEARVLNARGKVVEARLER) is the TRAM domain. [4Fe-4S] cluster contacts are provided by C93, C99, C102, and C181. Residues Q285, F314, N319, E335, D362, and D383 each coordinate S-adenosyl-L-methionine. The active-site Nucleophile is the C409.

Belongs to the class I-like SAM-binding methyltransferase superfamily. RNA M5U methyltransferase family. RlmD subfamily.

The enzyme catalyses uridine(1939) in 23S rRNA + S-adenosyl-L-methionine = 5-methyluridine(1939) in 23S rRNA + S-adenosyl-L-homocysteine + H(+). Functionally, catalyzes the formation of 5-methyl-uridine at position 1939 (m5U1939) in 23S rRNA. The polypeptide is 23S rRNA (uracil(1939)-C(5))-methyltransferase RlmD (Pseudomonas putida (strain ATCC 47054 / DSM 6125 / CFBP 8728 / NCIMB 11950 / KT2440)).